Consider the following 349-residue polypeptide: tRNA pseudouridine synthase D (349 aa).

Phenylalanine 27 contacts substrate. Aspartate 80 functions as the Nucleophile in the catalytic mechanism. Residue asparagine 129 participates in substrate binding. A TRUD domain is found at 155–303 (GVPNYFGAQR…VEAARRAMLL (149 aa)). Phenylalanine 329 is a substrate binding site.

The protein belongs to the pseudouridine synthase TruD family.

The enzyme catalyses uridine(13) in tRNA = pseudouridine(13) in tRNA. Responsible for synthesis of pseudouridine from uracil-13 in transfer RNAs. The chain is tRNA pseudouridine synthase D from Citrobacter koseri (strain ATCC BAA-895 / CDC 4225-83 / SGSC4696).